Here is a 349-residue protein sequence, read N- to C-terminus: Hydroxymethylglutaryl-CoA synthase (349 aa).

Residues Asp-30 and Ala-31 each coordinate (3S)-3-hydroxy-3-methylglutaryl-CoA. Glu-82 acts as the Proton donor/acceptor in catalysis. Cys-114 and Thr-155 together coordinate (3S)-3-hydroxy-3-methylglutaryl-CoA. Cys-114 acts as the Acyl-thioester intermediate in catalysis. Residue Arg-203 participates in CoA binding. Residues Thr-205 and His-238 each coordinate (3S)-3-hydroxy-3-methylglutaryl-CoA. Catalysis depends on His-238, which acts as the Proton donor/acceptor. Lys-243 serves as a coordination point for CoA. Positions 270 and 300 each coordinate (3S)-3-hydroxy-3-methylglutaryl-CoA.

Belongs to the thiolase-like superfamily. Archaeal HMG-CoA synthase family. As to quaternary structure, interacts with acetoacetyl-CoA thiolase that catalyzes the precedent step in the pathway and with a DUF35 protein. The acetoacetyl-CoA thiolase/HMG-CoA synthase complex channels the intermediate via a fused CoA-binding site, which allows for efficient coupling of the endergonic thiolase reaction with the exergonic HMGCS reaction.

The enzyme catalyses acetoacetyl-CoA + acetyl-CoA + H2O = (3S)-3-hydroxy-3-methylglutaryl-CoA + CoA + H(+). The protein operates within metabolic intermediate biosynthesis; (R)-mevalonate biosynthesis; (R)-mevalonate from acetyl-CoA: step 2/3. Functionally, catalyzes the condensation of acetyl-CoA with acetoacetyl-CoA to form 3-hydroxy-3-methylglutaryl-CoA (HMG-CoA). Functions in the mevalonate (MVA) pathway leading to isopentenyl diphosphate (IPP), a key precursor for the biosynthesis of isoprenoid compounds that are building blocks of archaeal membrane lipids. This chain is Hydroxymethylglutaryl-CoA synthase, found in Methanococcus maripaludis (strain C6 / ATCC BAA-1332).